The chain runs to 1563 residues: Superkiller complex protein 3 (1563 aa).

N-acetylserine is present on Ser2. 22 TPR repeats span residues Val6–Asn39, Tyr40–Gln73, Tyr157–Ile196, Gly272–Cys305, Ala307–Phe339, Pro386–Leu419, Ala420–Val453, Glu455–Met492, Gly493–Asp527, Lys564–Asp597, Cys598–Ser631, Thr632–Tyr665, Tyr633–Tyr665, Gly673–Val713, Val790–Asn824, Leu826–Asn860, Ala861–Tyr894, Ala980–Ala1013, Asn1020–Asp1053, Ile1055–Glu1084, Lys1325–Gln1358, and Val1399–Gln1432.

Belongs to the SKI3 family. Component of the SKI complex which consists of SKIC2, SKIC3 and SKIC8. Interacts with PAF1.

The protein resides in the cytoplasm. It is found in the nucleus. Its function is as follows. Component of the SKI complex, a multiprotein complex that assists the RNA-degrading exosome during the mRNA decay and quality-control pathways. The SKI complex catalyzes mRNA extraction from 80S ribosomal complexes in the 3'-5' direction and channels mRNA to the cytosolic exosome for degradation. SKI-mediated extraction of mRNA from stalled ribosomes allow binding of the Pelota-HBS1L complex and subsequent ribosome disassembly by ABCE1 for ribosome recycling. In the nucleus, the SKI complex associates with transcriptionally active genes in a manner dependent on PAF1 complex (PAF1C). The chain is Superkiller complex protein 3 from Mus musculus (Mouse).